The following is a 149-amino-acid chain: Myoglobin (149 aa).

Position 2 is an N-acetylthreonine (Thr-2). Residues 2-143 (TEWEHVNKVW…ICSDLETLYK (142 aa)) form the Globin domain. Position 60 (His-60) interacts with nitrite. His-60 is a binding site for O2. Residue His-89 coordinates heme b.

It belongs to the globin family. Monomeric.

Its subcellular location is the cytoplasm. The protein resides in the sarcoplasm. It carries out the reaction Fe(III)-heme b-[protein] + nitric oxide + H2O = Fe(II)-heme b-[protein] + nitrite + 2 H(+). The enzyme catalyses H2O2 + AH2 = A + 2 H2O. Functionally, monomeric heme protein which primary function is to store oxygen and facilitate its diffusion within muscle tissues. Reversibly binds oxygen through a pentacoordinated heme iron and enables its timely and efficient release as needed during periods of heightened demand. Depending on the oxidative conditions of tissues and cells, and in addition to its ability to bind oxygen, it also has a nitrite reductase activity whereby it regulates the production of bioactive nitric oxide. Under stress conditions, like hypoxia and anoxia, it also protects cells against reactive oxygen species thanks to its pseudoperoxidase activity. This is Myoglobin (mb) from Heterodontus portusjacksoni (Port Jackson shark).